The sequence spans 266 residues: 3-methyl-2-oxobutanoate hydroxymethyltransferase (266 aa).

Mg(2+) is bound by residues D45 and D84. 3-methyl-2-oxobutanoate is bound by residues 45-46, D84, and K112; that span reads DS. E114 contacts Mg(2+). E181 functions as the Proton acceptor in the catalytic mechanism.

This sequence belongs to the PanB family. Homodecamer; pentamer of dimers. Mg(2+) is required as a cofactor.

It is found in the cytoplasm. The enzyme catalyses 3-methyl-2-oxobutanoate + (6R)-5,10-methylene-5,6,7,8-tetrahydrofolate + H2O = 2-dehydropantoate + (6S)-5,6,7,8-tetrahydrofolate. It participates in cofactor biosynthesis; (R)-pantothenate biosynthesis; (R)-pantoate from 3-methyl-2-oxobutanoate: step 1/2. In terms of biological role, catalyzes the reversible reaction in which hydroxymethyl group from 5,10-methylenetetrahydrofolate is transferred onto alpha-ketoisovalerate to form ketopantoate. The sequence is that of 3-methyl-2-oxobutanoate hydroxymethyltransferase from Pseudomonas putida (strain ATCC 700007 / DSM 6899 / JCM 31910 / BCRC 17059 / LMG 24140 / F1).